We begin with the raw amino-acid sequence, 387 residues long: Probable serine/threonine-protein kinase PBL18 (387 aa).

Residues 1–37 form a disordered region; that stretch reads MGNCLDSSARVGNRESTFGGSSRISRKPNQSSRLSSL. The N-myristoyl glycine moiety is linked to residue Gly-2. Cys-4 is lipidated: S-palmitoyl cysteine. Polar residues predominate over residues 14–37; the sequence is RESTFGGSSRISRKPNQSSRLSSL. Thr-73 bears the Phosphothreonine mark. The Protein kinase domain occupies 84-365; that stretch reads FKPNSMIGEG…ADVLSTLQQL (282 aa). ATP contacts are provided by residues 90–98 and Lys-122; that span reads IGEGGFGCV. Tyr-167 carries the phosphotyrosine modification. Catalysis depends on Asp-215, which acts as the Proton acceptor. Ser-219 carries the phosphoserine modification. Thr-250 and Thr-255 each carry phosphothreonine. Phosphotyrosine is present on Tyr-263. The interval 368–387 is disordered; that stretch reads SSKKMGSTQNIVMSPSSHMS.

It belongs to the protein kinase superfamily. Ser/Thr protein kinase family.

It is found in the cell membrane. The catalysed reaction is L-seryl-[protein] + ATP = O-phospho-L-seryl-[protein] + ADP + H(+). It carries out the reaction L-threonyl-[protein] + ATP = O-phospho-L-threonyl-[protein] + ADP + H(+). May be involved in plant defense signaling. The protein is Probable serine/threonine-protein kinase PBL18 of Arabidopsis thaliana (Mouse-ear cress).